The sequence spans 578 residues: ER degradation-enhancing alpha-mannosidase-like protein 2 (578 aa).

A signal peptide spans 1 to 21 (MPFRLLIPLGLLCALLPQHHG). 4 N-linked (GlcNAc...) asparagine glycosylation sites follow: Asn-90, Asn-112, Asn-289, and Asn-450. A disordered region spans residues 517–557 (KNTVSSGPWEPPARPGTLFSPENHDQARERKPAKQKVPLLS). Residues 538–548 (ENHDQARERKP) show a composition bias toward basic and acidic residues.

It belongs to the glycosyl hydrolase 47 family. N-glycosylated. As to expression, expressed ubiquitously in all tissues tested with slightly higher levels detected in small intestine and peripheral blood leukocytes and weakest levels in brain and skeletal muscle.

The protein localises to the endoplasmic reticulum lumen. In terms of biological role, involved in the endoplasmic reticulum-associated degradation (ERAD) pathway that targets misfolded glycoproteins for degradation in an N-glycan-dependent manner. May initiate ERAD by promoting the first mannose trimming step of ERAD substrates, from Man9GlcNAc2 to Man8GlcNAc2. Seems to recognize and bind to exposed hydrophobic regions in target proteins. The chain is ER degradation-enhancing alpha-mannosidase-like protein 2 (EDEM2) from Homo sapiens (Human).